A 214-amino-acid chain; its full sequence is Large ribosomal subunit protein uL16 (214 aa).

The residue at position 32 (Arg-32) is a Citrulline. Residue Lys-175 forms a Glycyl lysine isopeptide (Lys-Gly) (interchain with G-Cter in SUMO2) linkage. A Glycyl lysine isopeptide (Lys-Gly) (interchain with G-Cter in ubiquitin) cross-link involves residue Lys-188.

The protein belongs to the universal ribosomal protein uL16 family. As to quaternary structure, component of the large ribosomal subunit. Mature ribosomes consist of a small (40S) and a large (60S) subunit. The 40S subunit contains about 33 different proteins and 1 molecule of RNA (18S). The 60S subunit contains about 49 different proteins and 3 molecules of RNA (28S, 5.8S and 5S). In terms of processing, citrullinated by PADI4. Post-translationally, ufmylated by UFL1.

It localises to the cytoplasm. Its function is as follows. Component of the large ribosomal subunit. Plays a role in the formation of actively translating ribosomes. May play a role in the embryonic brain development. The polypeptide is Large ribosomal subunit protein uL16 (Pongo abelii (Sumatran orangutan)).